Consider the following 463-residue polypeptide: L-seryl-tRNA(Sec) selenium transferase (463 aa).

Residue lysine 295 is modified to N6-(pyridoxal phosphate)lysine.

The protein belongs to the SelA family. In terms of assembly, homodecamer; pentamer of dimers. Binds only one seryl-tRNA(Sec) per dimer. Pyridoxal 5'-phosphate is required as a cofactor.

It is found in the cytoplasm. The enzyme catalyses L-seryl-tRNA(Sec) + selenophosphate + H(+) = L-selenocysteinyl-tRNA(Sec) + phosphate. Its pathway is aminoacyl-tRNA biosynthesis; selenocysteinyl-tRNA(Sec) biosynthesis; selenocysteinyl-tRNA(Sec) from L-seryl-tRNA(Sec) (bacterial route): step 1/1. Converts seryl-tRNA(Sec) to selenocysteinyl-tRNA(Sec) required for selenoprotein biosynthesis. This Shigella boydii serotype 4 (strain Sb227) protein is L-seryl-tRNA(Sec) selenium transferase.